Here is a 258-residue protein sequence, read N- to C-terminus: Chaperone protein caf1M (258 aa).

A signal peptide spans 1 to 20 (MILNRLSTLGIITFGMLSFA). C121 and C160 are joined by a disulfide.

The protein belongs to the periplasmic pilus chaperone family.

It is found in the periplasm. In terms of biological role, has a stimulatory role for the envelope antigen F1 secretion. It seems to interact with the subunit polypeptide and to prevent it from digestion by a protease. In Yersinia pestis, this protein is Chaperone protein caf1M (caf1M).